The following is a 134-amino-acid chain: Cytochrome b (134 aa).

3 helical membrane-spanning segments follow: residues 33-53, 77-98, and 113-133; these read FGSLLGLCLAVQILTGLFLAM, WLIRYMHANGASMFFICLFLHV, and WNMGIILLFAVMATAFMGYVL. Positions 83 and 97 each coordinate heme b.

Belongs to the cytochrome b family. In terms of assembly, the cytochrome bc1 complex contains 11 subunits: 3 respiratory subunits (MT-CYB, CYC1 and UQCRFS1), 2 core proteins (UQCRC1 and UQCRC2) and 6 low-molecular weight proteins (UQCRH/QCR6, UQCRB/QCR7, UQCRQ/QCR8, UQCR10/QCR9, UQCR11/QCR10 and a cleavage product of UQCRFS1). This cytochrome bc1 complex then forms a dimer. Heme b is required as a cofactor.

The protein localises to the mitochondrion inner membrane. In terms of biological role, component of the ubiquinol-cytochrome c reductase complex (complex III or cytochrome b-c1 complex) that is part of the mitochondrial respiratory chain. The b-c1 complex mediates electron transfer from ubiquinol to cytochrome c. Contributes to the generation of a proton gradient across the mitochondrial membrane that is then used for ATP synthesis. The chain is Cytochrome b (MT-CYB) from Microtus subterraneus (European pine vole).